A 189-amino-acid chain; its full sequence is dCTP deaminase (189 aa).

DCTP contacts are provided by residues 112–117, 136–138, Gln-157, Tyr-171, and Gln-181; these read KSTYAR and TLE. The active-site Proton donor/acceptor is Glu-138.

This sequence belongs to the dCTP deaminase family. Homotrimer.

The catalysed reaction is dCTP + H2O + H(+) = dUTP + NH4(+). The protein operates within pyrimidine metabolism; dUMP biosynthesis; dUMP from dCTP (dUTP route): step 1/2. Its function is as follows. Catalyzes the deamination of dCTP to dUTP. This Teredinibacter turnerae (strain ATCC 39867 / T7901) protein is dCTP deaminase.